Reading from the N-terminus, the 156-residue chain is ATP synthase subunit b (156 aa).

Residues 7–27 (LFVQAIVFLILVWFTMQFVWP) traverse the membrane as a helical segment.

Belongs to the ATPase B chain family. In terms of assembly, F-type ATPases have 2 components, F(1) - the catalytic core - and F(0) - the membrane proton channel. F(1) has five subunits: alpha(3), beta(3), gamma(1), delta(1), epsilon(1). F(0) has three main subunits: a(1), b(2) and c(10-14). The alpha and beta chains form an alternating ring which encloses part of the gamma chain. F(1) is attached to F(0) by a central stalk formed by the gamma and epsilon chains, while a peripheral stalk is formed by the delta and b chains.

Its subcellular location is the cell inner membrane. Its function is as follows. F(1)F(0) ATP synthase produces ATP from ADP in the presence of a proton or sodium gradient. F-type ATPases consist of two structural domains, F(1) containing the extramembraneous catalytic core and F(0) containing the membrane proton channel, linked together by a central stalk and a peripheral stalk. During catalysis, ATP synthesis in the catalytic domain of F(1) is coupled via a rotary mechanism of the central stalk subunits to proton translocation. Functionally, component of the F(0) channel, it forms part of the peripheral stalk, linking F(1) to F(0). This is ATP synthase subunit b from Verminephrobacter eiseniae (strain EF01-2).